Consider the following 359-residue polypeptide: Doublesex- and mab-3-related transcription factor B1 (359 aa).

Positions 7–54 (CSRCRNHGYLVPVKGHTGKCRWKQCICDKCYLITERQKIMAAQKVLRT) form a DNA-binding region, DM. 2 disordered regions span residues 111-149 (PPQA…RDRS) and 262-359 (SGLV…EQSN). 2 stretches are compositionally biased toward pro residues: residues 277 to 299 (CSPP…PQPQ) and 315 to 325 (LPPPPPPPSPP). Positions 348-359 (EPSQDSPQEQSN) are enriched in polar residues.

It belongs to the DMRT family. Brain.

The protein localises to the nucleus. The sequence is that of Doublesex- and mab-3-related transcription factor B1 (Dmrtb1) from Mus musculus (Mouse).